A 223-amino-acid polypeptide reads, in one-letter code: Ribose-5-phosphate isomerase A (223 aa).

Substrate is bound by residues 32-35 (TGST), 85-88 (DGAD), and 98-101 (KGGG). Glu107 (proton acceptor) is an active-site residue. Lys125 lines the substrate pocket.

The protein belongs to the ribose 5-phosphate isomerase family. Homodimer.

It carries out the reaction aldehydo-D-ribose 5-phosphate = D-ribulose 5-phosphate. It functions in the pathway carbohydrate degradation; pentose phosphate pathway; D-ribose 5-phosphate from D-ribulose 5-phosphate (non-oxidative stage): step 1/1. Its function is as follows. Catalyzes the reversible conversion of ribose-5-phosphate to ribulose 5-phosphate. The polypeptide is Ribose-5-phosphate isomerase A (Pseudomonas syringae pv. syringae (strain B728a)).